Here is an 878-residue protein sequence, read N- to C-terminus: Coatomer subunit gamma (878 aa).

6 HEAT repeats span residues 64-101 (REAT…VAED), 287-324 (RMLS…THPA), 326-359 (VTTC…GAES), 360-396 (SVER…KYPR), 399-434 (TVLM…ENAD), and 471-508 (ATPS…SCPA).

The protein belongs to the COPG family. Oligomeric complex that consists of at least the alpha, beta, beta', gamma, delta, epsilon and zeta subunits.

The protein resides in the cytoplasm. It localises to the golgi apparatus membrane. It is found in the cytoplasmic vesicle. Its subcellular location is the COPI-coated vesicle membrane. The protein localises to the endoplasmic reticulum. Its function is as follows. The coatomer is a cytosolic protein complex that binds to dilysine motifs and reversibly associates with Golgi non-clathrin-coated vesicles, which further mediate biosynthetic protein transport from the ER, via the Golgi up to the trans Golgi network. Coatomer complex is required for budding from Golgi membranes, and is essential for the retrograde Golgi-to-ER transport of dilysine-tagged proteins. Required for limiting lipid storage in lipid droplets. Involved in the expansion of luminal extracellular matrices and apical membrane during tubulogenesis. Required in the tracheal epithelium for luminal protein secretion and diametric tube growth. In salivary glands, required for deposition of O-glycans and luminal extracellular matrix assembly. Required for epidermal morphogenesis and cuticle development. This chain is Coatomer subunit gamma, found in Drosophila pseudoobscura pseudoobscura (Fruit fly).